Consider the following 40-residue polypeptide: Ferredoxin-2 (40 aa).

Residues 3–40 form the 2Fe-2S ferredoxin-type domain; the sequence is YNIKLITPEGTKEITCSDSEYILDAAEEKGLDLPYSCR. Cysteine 39 contributes to the [2Fe-2S] cluster binding site.

Belongs to the 2Fe2S plant-type ferredoxin family. [2Fe-2S] cluster is required as a cofactor.

It localises to the plastid. Its subcellular location is the chloroplast. Its function is as follows. Ferredoxins are iron-sulfur proteins that transfer electrons in a wide variety of metabolic reactions. This Pisum sativum (Garden pea) protein is Ferredoxin-2.